The primary structure comprises 60 residues: Large ribosomal subunit protein bL32 (60 aa).

The interval Met-1 to Gln-23 is disordered.

It belongs to the bacterial ribosomal protein bL32 family.

The sequence is that of Large ribosomal subunit protein bL32 from Chlamydia abortus (strain DSM 27085 / S26/3) (Chlamydophila abortus).